Reading from the N-terminus, the 266-residue chain is Protein YABBY 5 (266 aa).

Residues M1–P22 are disordered. The segment at C36–C63 adopts a C4-type zinc-finger fold. A compositionally biased stretch (low complexity) spans A119–S141. The disordered stretch occupies residues A119–P174. The segment covering M142 to R165 has biased composition (polar residues).

The protein belongs to the YABBY family.

It is found in the nucleus. In terms of biological role, may be involved in leaf cell growth and differentiation, rather than abaxial cell fate determination. In Oryza sativa subsp. indica (Rice), this protein is Protein YABBY 5 (YAB5).